A 508-amino-acid polypeptide reads, in one-letter code: Pyruvate kinase 2 (508 aa).

Position 50 (arginine 50) interacts with substrate. 4 residues coordinate K(+): asparagine 52, serine 54, aspartate 85, and threonine 86. 52-55 (NFSH) is a binding site for ATP. ATP-binding residues include arginine 92 and lysine 178. Position 243 (glutamate 243) interacts with Mg(2+). Glycine 266, aspartate 267, and threonine 299 together coordinate substrate. Aspartate 267 contacts Mg(2+).

This sequence belongs to the pyruvate kinase family. In terms of assembly, homotetramer. Mg(2+) is required as a cofactor. The cofactor is K(+).

It carries out the reaction pyruvate + ATP = phosphoenolpyruvate + ADP + H(+). It functions in the pathway carbohydrate degradation; glycolysis; pyruvate from D-glyceraldehyde 3-phosphate: step 5/5. In Candida glabrata (strain ATCC 2001 / BCRC 20586 / JCM 3761 / NBRC 0622 / NRRL Y-65 / CBS 138) (Yeast), this protein is Pyruvate kinase 2 (PYK2).